The primary structure comprises 370 residues: tRNA-specific 2-thiouridylase MnmA (370 aa).

ATP-binding positions include 9-16 (GMSGGVDS) and Met-35. The tract at residues 95-97 (NPD) is interaction with target base in tRNA. Residue Cys-100 is the Nucleophile of the active site. The cysteines at positions 100 and 196 are disulfide-linked. Gly-124 contacts ATP. An interaction with tRNA region spans residues 146 to 148 (KDQ). The Cysteine persulfide intermediate role is filled by Cys-196. The interval 308 to 309 (RY) is interaction with tRNA.

Belongs to the MnmA/TRMU family.

Its subcellular location is the cytoplasm. It catalyses the reaction S-sulfanyl-L-cysteinyl-[protein] + uridine(34) in tRNA + AH2 + ATP = 2-thiouridine(34) in tRNA + L-cysteinyl-[protein] + A + AMP + diphosphate + H(+). Catalyzes the 2-thiolation of uridine at the wobble position (U34) of tRNA, leading to the formation of s(2)U34. The sequence is that of tRNA-specific 2-thiouridylase MnmA from Ralstonia pickettii (strain 12J).